Reading from the N-terminus, the 624-residue chain is Prickle planar cell polarity protein 3 (624 aa).

A compositionally biased stretch (basic residues) spans methionine 1–glycine 12. A disordered region spans residues methionine 1–proline 26. Residues serine 74–threonine 182 form the PET domain. LIM zinc-binding domains lie at alanine 184–proline 249, arginine 250–glutamate 309, and tyrosine 310–threonine 373. Positions glutamate 371–arginine 617 are disordered. Over residues serine 383 to serine 409 the composition is skewed to low complexity. A compositionally biased stretch (pro residues) spans proline 447–alanine 458. A phosphoserine mark is found at serine 475 and serine 491. Residues serine 509 to histidine 541 show a composition bias toward basic residues. The span at leucine 545 to glutamate 564 shows a compositional bias: low complexity. Residues arginine 587 to alanine 601 are compositionally biased toward polar residues.

Belongs to the prickle / espinas / testin family. As to quaternary structure, interacts with VANGL2 via its C-terminus. The VANGL2-dependent membrane recruitment of PRICKLE3 is a prerequisite for its polarization. Interacts with WTIP. WTIP is involved in the recruitment of PRICKLE3 to the basal body. Interacts with MT-ATP8, a component of the mitochondrial complex V. As to expression, widely expressed.

Its subcellular location is the cytoplasm. It is found in the cell membrane. It localises to the mitochondrion. Its function is as follows. Involved in the planar cell polarity (PCP) pathway that is essential for the polarization of epithelial cells during morphogenetic processes, including gastrulation and neurulation. PCP is maintained by two molecular modules, the global and the core modules, PRICKLE3 being part of the core module. Distinct complexes of the core module segregate to opposite sides of the cell, where they interact with the opposite complex in the neighboring cell at or near the adherents junctions. Involved in the organization of the basal body. Involved in cilia growth and positioning. Required for proper assembly, stability, and function of mitochondrial membrane ATP synthase (mitochondrial complex V). In Mus musculus (Mouse), this protein is Prickle planar cell polarity protein 3.